The chain runs to 340 residues: S-adenosylmethionine:tRNA ribosyltransferase-isomerase (340 aa).

The protein belongs to the QueA family. Monomer.

Its subcellular location is the cytoplasm. The enzyme catalyses 7-aminomethyl-7-carbaguanosine(34) in tRNA + S-adenosyl-L-methionine = epoxyqueuosine(34) in tRNA + adenine + L-methionine + 2 H(+). Its pathway is tRNA modification; tRNA-queuosine biosynthesis. In terms of biological role, transfers and isomerizes the ribose moiety from AdoMet to the 7-aminomethyl group of 7-deazaguanine (preQ1-tRNA) to give epoxyqueuosine (oQ-tRNA). In Aliarcobacter butzleri (strain RM4018) (Arcobacter butzleri), this protein is S-adenosylmethionine:tRNA ribosyltransferase-isomerase.